Consider the following 737-residue polypeptide: Autophagy-related protein 22 (737 aa).

The interval arginine 115–proline 154 is disordered. Low complexity predominate over residues serine 125–glycine 141. 4 helical membrane-spanning segments follow: residues tyrosine 166 to leucine 186, serine 232 to isoleucine 252, lysine 264 to serine 284, and leucine 289 to leucine 309. The tract at residues glycine 327 to arginine 353 is disordered. Residues glutamate 338–glutamate 349 show a composition bias toward acidic residues. N-linked (GlcNAc...) asparagine glycosylation is present at asparagine 354. A helical transmembrane segment spans residues glycine 395–isoleucine 415. N-linked (GlcNAc...) asparagine glycosylation occurs at asparagine 419. 7 helical membrane passes run isoleucine 426 to leucine 446, leucine 487 to threonine 507, tryptophan 524 to tryptophan 544, isoleucine 559 to proline 579, tryptophan 593 to cysteine 613, leucine 632 to isoleucine 652, and alanine 661 to valine 681.

It belongs to the ATG22 family.

The protein localises to the vacuole membrane. Its function is as follows. Vacuolar effluxer which mediate the efflux of amino acids resulting from autophagic degradation. The release of autophagic amino acids allows the maintenance of protein synthesis and viability during nitrogen starvation. The protein is Autophagy-related protein 22 (apg-11) of Neurospora crassa (strain ATCC 24698 / 74-OR23-1A / CBS 708.71 / DSM 1257 / FGSC 987).